A 427-amino-acid chain; its full sequence is Histidine--tRNA ligase (427 aa).

Belongs to the class-II aminoacyl-tRNA synthetase family. In terms of assembly, homodimer.

The protein resides in the cytoplasm. It catalyses the reaction tRNA(His) + L-histidine + ATP = L-histidyl-tRNA(His) + AMP + diphosphate + H(+). The chain is Histidine--tRNA ligase from Corynebacterium urealyticum (strain ATCC 43042 / DSM 7109).